The chain runs to 399 residues: Elongation factor Tu (399 aa).

Residues 10–209 (KPHVNIGTIG…AVDDYIPTPV (200 aa)) enclose the tr-type G domain. Positions 19-26 (GHVDHGKT) are G1. GTP is bound at residue 19–26 (GHVDHGKT). A Mg(2+)-binding site is contributed by Thr26. The G2 stretch occupies residues 62-66 (GITIN). A G3 region spans residues 83 to 86 (DCPG). GTP is bound by residues 83 to 87 (DCPGH) and 138 to 141 (NKCD). The segment at 138–141 (NKCD) is G4. Residues 175–177 (SAY) are G5.

This sequence belongs to the TRAFAC class translation factor GTPase superfamily. Classic translation factor GTPase family. EF-Tu/EF-1A subfamily. As to quaternary structure, monomer.

Its subcellular location is the cytoplasm. It catalyses the reaction GTP + H2O = GDP + phosphate + H(+). In terms of biological role, GTP hydrolase that promotes the GTP-dependent binding of aminoacyl-tRNA to the A-site of ribosomes during protein biosynthesis. In Bifidobacterium longum subsp. infantis (strain ATCC 15697 / DSM 20088 / JCM 1222 / NCTC 11817 / S12), this protein is Elongation factor Tu.